The sequence spans 138 residues: MRTLWITAVLLVGVEGHLLQFRKMIKKMTGKEPIVSYAFYGCYCGKGGRGKPKDATDRCCFVHDCCYGKVTGCDPKWDYYTYSSENGDIVCEGDNPCTKEVCECDKAAAICFRDNLKTYKKRYMTFPDIFCTDPTEKC.

A signal peptide spans 1–16 (MRTLWITAVLLVGVEG). Intrachain disulfides connect Cys42–Cys131, Cys44–Cys60, Cys59–Cys111, Cys65–Cys138, Cys66–Cys104, Cys73–Cys97, and Cys91–Cys102. The Ca(2+) site is built by Tyr43, Gly45, and Gly47. The active site involves His63. Position 64 (Asp64) interacts with Ca(2+). Asp105 is a catalytic residue.

The protein belongs to the phospholipase A2 family. Group II subfamily. D49 sub-subfamily. It depends on Ca(2+) as a cofactor. In terms of tissue distribution, expressed by the venom gland.

It is found in the secreted. It catalyses the reaction a 1,2-diacyl-sn-glycero-3-phosphocholine + H2O = a 1-acyl-sn-glycero-3-phosphocholine + a fatty acid + H(+). Functionally, PLA2 catalyzes the calcium-dependent hydrolysis of the 2-acyl groups in 3-sn-phosphoglycerides. This is Basic phospholipase A2 PLA-B' from Protobothrops flavoviridis (Habu).